We begin with the raw amino-acid sequence, 738 residues long: Leucine-rich repeat flightless-interacting protein 1 (738 aa).

Residue Thr2 is modified to N-acetylthreonine. Ser16 carries the phosphoserine modification. The span at 40–65 (IRMKELERQQKEVEERPDKDFAEKGS) shows a compositional bias: basic and acidic residues. The tract at residues 40 to 98 (IRMKELERQQKEVEERPDKDFAEKGSRNMPSLSAATLASLGGTSSRRGSGDTSISMDTE) is disordered. Residues 78 to 94 (SLGGTSSRRGSGDTSIS) are compositionally biased toward low complexity. Ser83, Ser84, Ser88, and Ser92 each carry phosphoserine. A coiled-coil region spans residues 94–194 (SMDTEASIRE…LRQREEMLEK (101 aa)). A Glycyl lysine isopeptide (Lys-Gly) (interchain with G-Cter in SUMO1) cross-link involves residue Lys249. Composition is skewed to basic and acidic residues over residues 253–262 (VEKVGQRETL) and 277–297 (DCVD…RPVE). The interval 253–738 (VEKVGQRETL…SKSKEDCTMS (486 aa)) is disordered. Ser302 bears the Phosphoserine mark. Residues 314–326 (EVQSQDQENTSIL) are compositionally biased toward polar residues. A compositionally biased stretch (basic and acidic residues) spans 330–347 (EQIESHEVTNKSDSRDSN). A phosphoserine mark is found at Ser346 and Ser348. Residues 371 to 380 (KNQSENSMDS) show a composition bias toward polar residues. 2 stretches are compositionally biased toward basic and acidic residues: residues 381-400 (QGKE…RPDH) and 467-476 (SERELAHEAA). The DNA-binding stretch occupies residues 479-580 (EEALTQSSQA…KNKKKKAAAP (102 aa)). Polar residues-rich tracts occupy residues 483-495 (TQSS…NTVT) and 520-534 (TVQS…PGST). Positions 535 to 553 (DTKHTSPHAKERNKAKSEQ) are enriched in basic and acidic residues. 2 positions are modified to phosphoserine: Ser551 and Ser560. Over residues 563-577 (KKTKNKKKKNKKKKA) the composition is skewed to basic residues. The segment covering 606–626 (RVQATDKKWAAETPELKEDPQ) has biased composition (basic and acidic residues). Residues Ser675 and Ser701 each carry the phosphoserine modification. 2 stretches are compositionally biased toward basic and acidic residues: residues 691–703 (QADE…HSVD) and 720–738 (EQAR…CTMS).

The protein belongs to the LRRFIP family. Homodimer. May also form higher oligomers. Interacts with FLII. Interacts with MYD88. Competes with FLII for MyD88-binding, even in the absence of LPS.

The protein localises to the nucleus. Its subcellular location is the cytoplasm. In terms of biological role, transcriptional repressor which preferentially binds to the GC-rich consensus sequence (5'-AGCCCCCGGCG-3') and may regulate expression of TNF, EGFR and PDGFA. May control smooth muscle cells proliferation following artery injury through PDGFA repression. May also bind double-stranded RNA. Positively regulates Toll-like receptor (TLR) signaling in response to agonist probably by competing with the negative FLII regulator for MYD88-binding. The sequence is that of Leucine-rich repeat flightless-interacting protein 1 (Lrrfip1) from Rattus norvegicus (Rat).